Reading from the N-terminus, the 193-residue chain is Major intrinsically disordered NOTCH2-binding receptor 1-like homolog (193 aa).

Phosphoserine is present on Ser82. Asn128 carries an N-linked (GlcNAc...) asparagine glycan. Residues 172-192 traverse the membrane as a helical segment; sequence GLILLLVASILVTIVTLSTIF.

It belongs to the MINAR family. As to quaternary structure, interacts with NOTCH2. In terms of tissue distribution, widely expressed in the cortex and Purkinje cells of cerebellum. Expressed in the inner ear, mainly in the hair cells, spiral ganglia, the spiral limbus, and the stria vascularis.

The protein localises to the lysosome membrane. Its subcellular location is the endoplasmic reticulum membrane. Functionally, binds cholesterol and may regulate the distribution and homeostasis of cholesterol in hair cells. May play a role in angiogenesis. In Mus musculus (Mouse), this protein is Major intrinsically disordered NOTCH2-binding receptor 1-like homolog.